The following is an 807-amino-acid chain: Serine/threonine-protein kinase AfsK (807 aa).

One can recognise a Protein kinase domain in the interval 16 to 272; it reads FEVLGRLGAG…QAQLAPHLFA (257 aa). Residues 22 to 30 and K44 contribute to the ATP site; that span reads LGAGGMGLV. The residue at position 71 (S71) is a Phosphoserine; by autocatalysis. D138 (proton acceptor) is an active-site residue. T168 carries the phosphothreonine; by autocatalysis modification. Disordered regions lie at residues 292 to 328 and 353 to 429; these read MIER…HRLA and AGPS…PSPA. Residues 297 to 315 are compositionally biased toward basic residues; the sequence is RGGRRTARRPPRPRPRRLR. Residues 353–363 are compositionally biased toward low complexity; the sequence is AGPSAAPDGGP.

It belongs to the protein kinase superfamily. Ser/Thr protein kinase family. Interacts (via the N-terminal kinase domain) with KbpA; the interaction prevents autophosphorylation of AfsK. In terms of processing, autophosphorylated mainly on threonine residues. Some phosphorylation on serine residues. Autophosphorylation on Thr-168 is the major site enhancing kinase activity towards AfsR, and is regulated though interaction with KbpA.

The enzyme catalyses L-seryl-[protein] + ATP = O-phospho-L-seryl-[protein] + ADP + H(+). It carries out the reaction L-threonyl-[protein] + ATP = O-phospho-L-threonyl-[protein] + ADP + H(+). Component of the AfsK/AfsR system involved in the response of aerial mycelium formation to glucose. The sequence is that of Serine/threonine-protein kinase AfsK (afsK) from Streptomyces griseus.